A 174-amino-acid polypeptide reads, in one-letter code: NADH-ubiquinone oxidoreductase chain 6 (174 aa).

A run of 4 helical transmembrane segments spans residues 24–44 (LALGLTLLIQTIFVCLLSGLM), 53–73 (ILFLIFLGGMLVLFIYVTSLA), 82–102 (IKLTLFSMFILFFMFILSMIL), and 143–163 (FVTILLMNYLLITLIVVVKIT).

It belongs to the complex I subunit 6 family.

The protein localises to the mitochondrion membrane. It carries out the reaction a ubiquinone + NADH + 5 H(+)(in) = a ubiquinol + NAD(+) + 4 H(+)(out). Functionally, core subunit of the mitochondrial membrane respiratory chain NADH dehydrogenase (Complex I) that is believed to belong to the minimal assembly required for catalysis. Complex I functions in the transfer of electrons from NADH to the respiratory chain. The immediate electron acceptor for the enzyme is believed to be ubiquinone. In Drosophila yakuba (Fruit fly), this protein is NADH-ubiquinone oxidoreductase chain 6 (mt:ND6).